The primary structure comprises 434 residues: Serine hydroxymethyltransferase (434 aa).

(6S)-5,6,7,8-tetrahydrofolate contacts are provided by residues L131 and 135-137 (GHL). K240 is subject to N6-(pyridoxal phosphate)lysine.

It belongs to the SHMT family. As to quaternary structure, homodimer. Requires pyridoxal 5'-phosphate as cofactor.

Its subcellular location is the cytoplasm. The catalysed reaction is (6R)-5,10-methylene-5,6,7,8-tetrahydrofolate + glycine + H2O = (6S)-5,6,7,8-tetrahydrofolate + L-serine. It participates in one-carbon metabolism; tetrahydrofolate interconversion. The protein operates within amino-acid biosynthesis; glycine biosynthesis; glycine from L-serine: step 1/1. Its function is as follows. Catalyzes the reversible interconversion of serine and glycine with tetrahydrofolate (THF) serving as the one-carbon carrier. This reaction serves as the major source of one-carbon groups required for the biosynthesis of purines, thymidylate, methionine, and other important biomolecules. Also exhibits THF-independent aldolase activity toward beta-hydroxyamino acids, producing glycine and aldehydes, via a retro-aldol mechanism. The chain is Serine hydroxymethyltransferase from Gluconobacter oxydans (strain 621H) (Gluconobacter suboxydans).